The following is a 694-amino-acid chain: MADSLLLLKRVPSRHTWLRARKARPQLMLSRRPRRRLRNLRWRSRRRLRRRLLQAQAAGADWLQGGCLVSGDAALQRLKTSARRRASSPEPAEDPVPSGPAILPIPPVRPAGSGRAVLLLPLGQGFTFSGICCVTCLYGQVQVFGFTISQGQPAQNVFSTYTHSRLTINAVHYSVHEKSKKEMKREARVLLRPYLNQDDRYCLMSSFSPLCSIVLLERLKTSTVNFIISHPGLSYIFVQEVRTFQINSEYFALRSVGIRREKKKTGLRLTESAFAVMEELVSISSEEADSCPVILVCGCQDIGKSTFNRYLINQLLNSVSCVDYLECDLGQTEFTPPGCISLLNITEPVLGPPFTHQRTPQKMVYYGKTSCKNNFENYIEVIKYVFSSYKRESPLIINTMGWVADQGLLLLIDLIRLLSPSHVVQFSSDRSKYMPDLTPDFVDDMDGLYTRRRSRVRNRGFHLPEFAESLEFADEEKEGPVMSTGYKLMFVKSEFVTGKTSRNRESHNRILRELAVLGYLSQLQPPVPKPLRALHGLTPYQVPFNAVALRIIHADVAPTHILYAVNASWVGLCKILDDVRGYASGPILLAQSPICDCVGFGICRGIDMEKKLYHILTPVPPEELRHVNCLLVGAVNIPQCVLKSQGGLEGTIPYVTTDYNFKLPGASEKIGARESGATYKEKGHPKPKFYRKTY.

Alanine 2 bears the N-acetylalanine mark. The Nucleolar localization signal motif lies at 31–47 (RRPRRRLRNLRWRSRRR). Positions 80 to 101 (TSARRRASSPEPAEDPVPSGPA) are disordered. Residue 298 to 305 (GCQDIGKS) participates in ATP binding. The tract at residues 472-694 (FADEEKEGPV…PKPKFYRKTY (223 aa)) is interaction with LAS1L. A Glycyl lysine isopeptide (Lys-Gly) (interchain with G-Cter in SUMO2) cross-link involves residue lysine 477.

Belongs to the Clp1 family. NOL9/GRC3 subfamily. Interacts with PELP1, WDR18 and SENP3. Interacts with LAS1L to form an ITS2 pre-rRNA endonuclease-kinase complex.

The protein localises to the nucleus. Its subcellular location is the nucleolus. The enzyme catalyses a 5'-end dephospho-2'-deoxyribonucleoside-DNA + ATP = a 5'-end 5'-phospho-2'-deoxyribonucleoside-DNA + ADP + H(+). It carries out the reaction a 5'-end dephospho-ribonucleoside-RNA + ATP = a 5'-end 5'-phospho-ribonucleoside-RNA + ADP + H(+). Functionally, polynucleotide kinase that can phosphorylate the 5'-hydroxyl groups of single-stranded and double-stranded RNA and DNA substrates. Involved in rRNA processing and its kinase activity is required for the processing of the 32S precursor into 5.8S and 28S rRNAs, more specifically for the generation of the major 5.8S(S) form. Required for the efficient pre-rRNA processing of internal transcribed spacer 2 (ITS2). Associates with LAS1L to form an ITS2 pre-rRNA endonuclease-kinase complex and is responsible for the transport of this complex into the nucleolus. The polypeptide is Polynucleotide 5'-hydroxyl-kinase NOL9 (NOL9) (Bos taurus (Bovine)).